Reading from the N-terminus, the 119-residue chain is NAD(P)H-quinone oxidoreductase subunit M (119 aa).

It belongs to the complex I NdhM subunit family. As to quaternary structure, NDH-1 can be composed of about 15 different subunits; different subcomplexes with different compositions have been identified which probably have different functions.

The protein localises to the cellular thylakoid membrane. It carries out the reaction a plastoquinone + NADH + (n+1) H(+)(in) = a plastoquinol + NAD(+) + n H(+)(out). It catalyses the reaction a plastoquinone + NADPH + (n+1) H(+)(in) = a plastoquinol + NADP(+) + n H(+)(out). Its function is as follows. NDH-1 shuttles electrons from an unknown electron donor, via FMN and iron-sulfur (Fe-S) centers, to quinones in the respiratory and/or the photosynthetic chain. The immediate electron acceptor for the enzyme in this species is believed to be plastoquinone. Couples the redox reaction to proton translocation, and thus conserves the redox energy in a proton gradient. Cyanobacterial NDH-1 also plays a role in inorganic carbon-concentration. The protein is NAD(P)H-quinone oxidoreductase subunit M of Gloeothece citriformis (strain PCC 7424) (Cyanothece sp. (strain PCC 7424)).